A 60-amino-acid chain; its full sequence is Toxin C10S2C2 (60 aa).

4 disulfide bridges follow: Cys-3-Cys-22, Cys-17-Cys-39, Cys-41-Cys-52, and Cys-53-Cys-58. The interval 41–48 (CPTAMWPY) is important for binding to L-type calcium channels.

The protein belongs to the three-finger toxin family. Short-chain subfamily. L-type calcium blocker sub-subfamily. Expressed by the venom gland.

The protein resides in the secreted. Functionally, this specific blocker of the L-type calcium channel (Cav1/CACNA1) is a smooth muscle relaxant and an inhibitor of cardiac contractions. In Dendroaspis angusticeps (Eastern green mamba), this protein is Toxin C10S2C2.